The sequence spans 115 residues: U3-lycotoxin-Ls1a (115 aa).

Residues 1-20 form the signal peptide; the sequence is MKFVLLFGVLLLTLFSYSSA. The propeptide occupies 21 to 44; the sequence is EMLDDFDQADEDELLSLIEKEEAR. Cystine bridges form between cysteine 48-cysteine 63, cysteine 55-cysteine 72, cysteine 62-cysteine 87, and cysteine 74-cysteine 85.

The protein belongs to the neurotoxin 19 (CSTX) family. 01 subfamily. Expressed by the venom gland.

Its subcellular location is the secreted. The polypeptide is U3-lycotoxin-Ls1a (Lycosa singoriensis (Wolf spider)).